Here is a 424-residue protein sequence, read N- to C-terminus: Tyrosine--tRNA ligase (424 aa).

Tyrosine 37 contacts L-tyrosine. A 'HIGH' region motif is present at residues 42 to 51 (PTADSLHLGH). An N6-acetyllysine modification is found at lysine 144. Residues tyrosine 175 and glutamine 179 each coordinate L-tyrosine. Positions 235 to 239 (KFGKT) match the 'KMSKS' region motif. An ATP-binding site is contributed by lysine 238. The S4 RNA-binding domain occupies 357–414 (ADLMQALVDSELQPSRGQARKTIASNAITINGEKQSDPEYFFKEEDRLFGRFTLLRRG).

This sequence belongs to the class-I aminoacyl-tRNA synthetase family. TyrS type 1 subfamily. In terms of assembly, homodimer.

Its subcellular location is the cytoplasm. The enzyme catalyses tRNA(Tyr) + L-tyrosine + ATP = L-tyrosyl-tRNA(Tyr) + AMP + diphosphate + H(+). Catalyzes the attachment of tyrosine to tRNA(Tyr) in a two-step reaction: tyrosine is first activated by ATP to form Tyr-AMP and then transferred to the acceptor end of tRNA(Tyr). The polypeptide is Tyrosine--tRNA ligase (Escherichia coli O8 (strain IAI1)).